Reading from the N-terminus, the 400-residue chain is tRNA-specific 2-thiouridylase MnmA (400 aa).

ATP-binding positions include 19 to 26 (AMSGGVDS) and leucine 45. Residue cysteine 113 is the Nucleophile of the active site. Cysteine 113 and cysteine 210 are oxidised to a cystine. ATP is bound at residue glycine 137. The tract at residues 160 to 162 (RDQ) is interaction with tRNA. Cysteine 210 serves as the catalytic Cysteine persulfide intermediate.

It belongs to the MnmA/TRMU family.

Its subcellular location is the cytoplasm. It carries out the reaction S-sulfanyl-L-cysteinyl-[protein] + uridine(34) in tRNA + AH2 + ATP = 2-thiouridine(34) in tRNA + L-cysteinyl-[protein] + A + AMP + diphosphate + H(+). In terms of biological role, catalyzes the 2-thiolation of uridine at the wobble position (U34) of tRNA, leading to the formation of s(2)U34. The polypeptide is tRNA-specific 2-thiouridylase MnmA (Rhodopseudomonas palustris (strain BisA53)).